Consider the following 539-residue polypeptide: Probable malate:quinone oxidoreductase 3 (539 aa).

The segment at 516–539 (LEPPVSPQRPESIRPADSQGVASR) is disordered.

The protein belongs to the MQO family. The cofactor is FAD.

It carries out the reaction (S)-malate + a quinone = a quinol + oxaloacetate. Its pathway is carbohydrate metabolism; tricarboxylic acid cycle; oxaloacetate from (S)-malate (quinone route): step 1/1. This is Probable malate:quinone oxidoreductase 3 from Pseudomonas putida (strain ATCC 47054 / DSM 6125 / CFBP 8728 / NCIMB 11950 / KT2440).